We begin with the raw amino-acid sequence, 178 residues long: MEQFHGTTIVSVRRGDKVALGGDGQVTLGNIVMKGGAKKVRRIYNNKVLVGFAGGTADAFSLLDRFEAKLEKHQGNLTRAAVELAKDWRTDRMLRRLEAMLITADATTTLVITGNGDVLDPEGGICAIGSGGAYAQAAAKALADNTDLSPREIVEKSLEIAGDMCIYTNHNRVIETIE.

T7 is an active-site residue. The Na(+) site is built by G162, C165, and T168.

The protein belongs to the peptidase T1B family. HslV subfamily. In terms of assembly, a double ring-shaped homohexamer of HslV is capped on each side by a ring-shaped HslU homohexamer. The assembly of the HslU/HslV complex is dependent on binding of ATP.

The protein resides in the cytoplasm. It carries out the reaction ATP-dependent cleavage of peptide bonds with broad specificity.. Allosterically activated by HslU binding. Its function is as follows. Protease subunit of a proteasome-like degradation complex believed to be a general protein degrading machinery. This is ATP-dependent protease subunit HslV from Paraburkholderia phymatum (strain DSM 17167 / CIP 108236 / LMG 21445 / STM815) (Burkholderia phymatum).